An 84-amino-acid polypeptide reads, in one-letter code: DNA-directed RNA polymerase subunit Rpo5 (84 aa).

This sequence belongs to the archaeal Rpo5/eukaryotic RPB5 RNA polymerase subunit family. In terms of assembly, part of the 13-subunit RNA polymerase complex.

Its subcellular location is the cytoplasm. The catalysed reaction is RNA(n) + a ribonucleoside 5'-triphosphate = RNA(n+1) + diphosphate. DNA-dependent RNA polymerase (RNAP) catalyzes the transcription of DNA into RNA using the four ribonucleoside triphosphates as substrates. The chain is DNA-directed RNA polymerase subunit Rpo5 from Saccharolobus solfataricus (strain ATCC 35092 / DSM 1617 / JCM 11322 / P2) (Sulfolobus solfataricus).